We begin with the raw amino-acid sequence, 270 residues long: Phosphatidylglycerol--prolipoprotein diacylglyceryl transferase (270 aa).

The next 7 membrane-spanning stretches (helical) occupy residues 10–30, 56–76, 92–112, 120–140, 175–195, 202–222, and 237–257; these read VAVAIGPLQIHWYGLMYLVGI, LIFWLAMGVIVGGRLGYVLFY, WKGGMAFHGGFVGVMIAAWWF, FFQLMDFVAPLVPIGLGAGRI, SQLYQFALEGVALFIILNLYA, MAVSGMFALFYGIFRFVVEFV, and VTMGQILSLPMIIAGLLLIWL. Residue R139 coordinates a 1,2-diacyl-sn-glycero-3-phospho-(1'-sn-glycerol).

This sequence belongs to the Lgt family.

The protein resides in the cell inner membrane. It catalyses the reaction L-cysteinyl-[prolipoprotein] + a 1,2-diacyl-sn-glycero-3-phospho-(1'-sn-glycerol) = an S-1,2-diacyl-sn-glyceryl-L-cysteinyl-[prolipoprotein] + sn-glycerol 1-phosphate + H(+). It participates in protein modification; lipoprotein biosynthesis (diacylglyceryl transfer). Its function is as follows. Catalyzes the transfer of the diacylglyceryl group from phosphatidylglycerol to the sulfhydryl group of the N-terminal cysteine of a prolipoprotein, the first step in the formation of mature lipoproteins. This Pseudomonas syringae pv. syringae (strain B728a) protein is Phosphatidylglycerol--prolipoprotein diacylglyceryl transferase.